Consider the following 92-residue polypeptide: MSSRSTTIAFLFIATLLVFQCVSAQSSAEDADYLEKYQRIARAPKPKFIRFGRAGAKFIRFGRSRNTWEDGYASPSVNELYVKRGAKFIRFG.

Positions 1-41 (MSSRSTTIAFLFIATLLVFQCVSAQSSAEDADYLEKYQRIA) are excised as a propeptide. F51 and F61 each carry phenylalanine amide. Residues 64-82 (SRNTWEDGYASPSVNELYV) constitute a propeptide that is removed on maturation. F91 carries the phenylalanine amide modification.

It belongs to the FARP (FMRFamide related peptide) family. In terms of tissue distribution, each flp gene is expressed in a distinct set of neurons. Flp-5 is expressed in the ASE sensory neurons, the 14 and M4 cholinergic pharyngeal motoneurons, and the PVT and RMG neurons. It is weakly expressed in the PB and 12 neurons. Also expressed in pharyngeal muscle.

It localises to the secreted. Its function is as follows. FMRFamides and FMRFamide-like peptides are neuropeptides. GAKFIRF-amide has an excitatory effect on dissected pharyngeal myogenic muscle system. This chain is FMRFamide-like neuropeptides 5, found in Caenorhabditis elegans.